Here is a 143-residue protein sequence, read N- to C-terminus: uncharacterized protein (143 aa).

The protein resides in the mitochondrion. This is an uncharacterized protein from Arabidopsis thaliana (Mouse-ear cress).